Consider the following 310-residue polypeptide: MILTVTMNPSVDIAYQLDVFNLDTVNRVAETHKTPGGKGLNVTRVLSQVGDDVLATGLLGGKIGEFIQKELDQVGIEHDFSPISGETRNCIAILHEGQQTEILESGPTISDEEGKVFLEHFESLVKQVSIISISGSLPKGLPVDFYSKMIEICERYQKPVVLDCSGQALLEVLKGHAKPTVIKPNTEELSQLLNMEVTSDTSVLKAALDQDLFDGVEWVIVSLGSKGAFAKHIDSYYQVTIPKIEVVNPVGSGDSTVAGITSALYHAESDEELLKKANCLGMLNAQEKQTGHVNMANYSALFERIKVEEV.

This sequence belongs to the carbohydrate kinase PfkB family. LacC subfamily.

It catalyses the reaction D-tagatofuranose 6-phosphate + ATP = D-tagatofuranose 1,6-bisphosphate + ADP + H(+). It functions in the pathway carbohydrate metabolism; D-tagatose 6-phosphate degradation; D-glyceraldehyde 3-phosphate and glycerone phosphate from D-tagatose 6-phosphate: step 1/2. This is Tagatose-6-phosphate kinase from Streptococcus uberis (strain ATCC BAA-854 / 0140J).